Here is a 449-residue protein sequence, read N- to C-terminus: Phosphoglucosamine mutase (449 aa).

Ser100 serves as the catalytic Phosphoserine intermediate. Residues Ser100, Asp241, Asp243, and Asp245 each coordinate Mg(2+). Residue Ser100 is modified to Phosphoserine.

It belongs to the phosphohexose mutase family. Requires Mg(2+) as cofactor. Post-translationally, activated by phosphorylation.

It catalyses the reaction alpha-D-glucosamine 1-phosphate = D-glucosamine 6-phosphate. Its function is as follows. Catalyzes the conversion of glucosamine-6-phosphate to glucosamine-1-phosphate. This Clostridium botulinum (strain ATCC 19397 / Type A) protein is Phosphoglucosamine mutase.